The chain runs to 708 residues: MLKLFSAFRKNKIWDFNGGIHPPEMKTQSNGTPLRQVPLAQRFVIPLKQHIGAEGELCVSVGDKVLRGQPLTRGRGKMLPVHAPTSGTVTAIAPHSTAHPSALAELSVIIDADGEDCWIPRDGWADYRTRSREELIERIHQFGVAGLGGAGFPTGVKLQGGGDKIETLIINAAECEPYITADDRLMQDCAAQVVEGIRILAHILQPREILIGIEDNKPQAISMLRAVLADSNDISLRVIPTKYPSGGAKQLTYILTGKQVPHGGRSSDIGVLMQNVGTAYAVKRAVIDGEPITERVVTLTGEAIARPGNVWARLGTPVRHLLNDAGFCPSADQMVIMGGPLMGFTLPWLDVPVVKITNCLLAPSANELGEPQEEQSCIRCSACADACPADLLPQQLYWFSKGQQHDKATTHNIADCIECGACAWVCPSNIPLVQYFRQEKAEIAAIRQEEKRAAEAKARFEARQARLEREKAARLERHKSAAVQPAAKDKDAIAAALARVKEKQAQATQPIVIKAGERPDNSAIIAAREARKAQARAKQAELQQTNDAATVADPRKTAVEAAIARAKARKLEQQQANAEPEEQVDPRKAAVEAAIARAKARKLEQQQSNAEPEEQVDPRKAAVEAAIARAKARKLEQQQANAEPEEQVDPRKAAVEAAIARAKARKLEQQQTNAEPEEQVDPRKAAVAAAIARAQAKKAAQQKVVNED.

2 consecutive 4Fe-4S ferredoxin-type domains span residues 369-397 (GEPQEEQSCIRCSACADACPADLLPQQLY) and 407-436 (KATTHNIADCIECGACAWVCPSNIPLVQYF). The [4Fe-4S] cluster site is built by Cys-377, Cys-380, Cys-383, Cys-387, Cys-416, Cys-419, Cys-422, and Cys-426. A disordered region spans residues 599 to 686 (KARKLEQQQS…EEQVDPRKAA (88 aa)).

The protein belongs to the 4Fe4S bacterial-type ferredoxin family. RnfC subfamily. The complex is composed of six subunits: RsxA, RsxB, RsxC, RsxD, RsxE and RsxG. Requires [4Fe-4S] cluster as cofactor.

It is found in the cell inner membrane. In terms of biological role, part of a membrane-bound complex that couples electron transfer with translocation of ions across the membrane. Required to maintain the reduced state of SoxR. This Escherichia coli (strain 55989 / EAEC) protein is Ion-translocating oxidoreductase complex subunit C.